Here is a 484-residue protein sequence, read N- to C-terminus: Hemogen (484 aa).

Positions Met-1–Ser-25 are enriched in basic and acidic residues. Disordered stretches follow at residues Met-1–Trp-32 and Lys-44–Gln-91. Residues Gln-7 to Glu-87 form a necessary for nuclear localization region. Basic residues predominate over residues Lys-61–Gln-79. A phosphoserine mark is found at Ser-123, Ser-159, Ser-181, Ser-188, and Ser-201. Thr-246 bears the Phosphothreonine mark. Disordered regions lie at residues Asp-265–Gly-290, Glu-306–Glu-369, and Gln-386–Glu-471. Positions Glu-306–Glu-320 are enriched in basic and acidic residues. Phosphoserine is present on residues Ser-349 and Ser-353. The residue at position 360 (Thr-360) is a Phosphothreonine. A phosphoserine mark is found at Ser-363 and Ser-367. Composition is skewed to basic and acidic residues over residues Tyr-413–Gln-428, Pro-438–Asp-447, and Glu-454–Pro-463.

As to expression, expressed in hematopoietic precursor cells, thyroid and spermatids (at protein level). Expressed in bone marrow, testis, thymus. Expressed in prostate cancer and ovarian cancer. Also expressed in thymus and thyroid tumors, non-Hodgkin lymphoma, various leukemia cell lines, peripheral blood mononuclear cells (PBMCs) and bone marrow mononuclear cells (BMMCs) of patients with leukemia.

The protein resides in the nucleus. Its function is as follows. Regulates the proliferation and differentiation of hematopoietic cells. Overexpression block the TPA-induced megakaryocytic differentiation in the K562 cell model. May also prevent cell apoptosis through the activation of the nuclear factor-kappa B (NF-kB). The chain is Hemogen (HEMGN) from Homo sapiens (Human).